We begin with the raw amino-acid sequence, 37 residues long: U12-myrmicitoxin-Mri1a (37 aa).

The N-terminal stretch at 1–23 is a signal peptide; sequence MKTIELITIFAMITTLMVTVVAG. Residues 24–25 constitute a propeptide that is removed on maturation; it reads DP. The residue at position 35 (valine 35) is a Valine amide.

As to expression, expressed by the venom gland.

It localises to the secreted. Toxin that induces mild paralysis, and reduces survival and reproduction when injected into aphids (A.pisum). May affect various processes in the aphid, including wound healing and hemolymph coagulation. It does not increase the sensitivity of the aphids to the chemical insecticides imidacloprid, methomyl and Spirotetramat. Has no insecticidal activity when injected into blowfly (L.caesar). Does not display any antibacterial or antifungal activity. The protein is U12-myrmicitoxin-Mri1a of Manica rubida (European giant red ant).